We begin with the raw amino-acid sequence, 314 residues long: UDP-glucose 4-epimerase (314 aa).

NAD(+) contacts are provided by residues 11-12 (FI), 31-36 (DNFATG), 56-57 (DI), and 77-81 (LAAQI). 2 residues coordinate substrate: serine 121 and tyrosine 146. NAD(+) contacts are provided by tyrosine 146 and lysine 150. The Proton acceptor role is filled by tyrosine 146. Substrate contacts are provided by residues asparagine 175, 189 to 190 (VV), 204 to 206 (RVF), arginine 213, and 271 to 274 (RLGD).

Belongs to the NAD(P)-dependent epimerase/dehydratase family. In terms of assembly, homodimer. The cofactor is NAD(+).

The catalysed reaction is UDP-alpha-D-glucose = UDP-alpha-D-galactose. It participates in carbohydrate metabolism; galactose metabolism. Involved in the metabolism of galactose. Catalyzes the conversion of UDP-galactose (UDP-Gal) to UDP-glucose (UDP-Glc) through a mechanism involving the transient reduction of NAD. This is UDP-glucose 4-epimerase (galE1) from Mycobacterium tuberculosis (strain CDC 1551 / Oshkosh).